The chain runs to 386 residues: Lipoyl synthase, mitochondrial (386 aa).

Positions 1–48 (MHGRRHLAASLTRALTQAPSRSISSTPSLLQTLDPSVPSPSPPPAAEP) are disordered. The segment covering 13-34 (RALTQAPSRSISSTPSLLQTLD) has biased composition (polar residues). Pro residues predominate over residues 37–46 (VPSPSPPPAA). 7 residues coordinate [4Fe-4S] cluster: Cys-113, Cys-118, Cys-124, Cys-144, Cys-148, Cys-151, and Ser-360. The 221-residue stretch at 129-349 (ETGTATATIM…RALGVEMGFR (221 aa)) folds into the Radical SAM core domain.

The protein belongs to the radical SAM superfamily. Lipoyl synthase family. [4Fe-4S] cluster is required as a cofactor.

It is found in the mitochondrion. It carries out the reaction [[Fe-S] cluster scaffold protein carrying a second [4Fe-4S](2+) cluster] + N(6)-octanoyl-L-lysyl-[protein] + 2 oxidized [2Fe-2S]-[ferredoxin] + 2 S-adenosyl-L-methionine + 4 H(+) = [[Fe-S] cluster scaffold protein] + N(6)-[(R)-dihydrolipoyl]-L-lysyl-[protein] + 4 Fe(3+) + 2 hydrogen sulfide + 2 5'-deoxyadenosine + 2 L-methionine + 2 reduced [2Fe-2S]-[ferredoxin]. Its pathway is protein modification; protein lipoylation via endogenous pathway; protein N(6)-(lipoyl)lysine from octanoyl-[acyl-carrier-protein]: step 2/2. In terms of biological role, catalyzes the radical-mediated insertion of two sulfur atoms into the C-6 and C-8 positions of the octanoyl moiety bound to the lipoyl domains of lipoate-dependent enzymes, thereby converting the octanoylated domains into lipoylated derivatives. This Sorghum bicolor (Sorghum) protein is Lipoyl synthase, mitochondrial.